The following is a 123-amino-acid chain: uncharacterized protein (123 aa).

The disordered stretch occupies residues 100 to 123 (NKQPKTTHHFSTNSSEYKSRKSKH).

This is an uncharacterized protein from Acanthamoeba polyphaga mimivirus (APMV).